An 806-amino-acid chain; its full sequence is MEGPNSMEVGSLEVKKNDKDPWSKTAYLGGRLVSKIPAVYSNDNKFVFLTYDTFIGIFSLITGDCINRIFFPNNLANLLPVAVLLSPENAFELYVIFQSGYVCVHDWSNSELLRTMEISTRVHAASFSGKLLFAVTDTPASDSASSQDRFTLYALSPSTSKEGSSILIPTFVSKFNEFLALDSSLRDNNLATVAVITTDKAIFSLNVPKKKRSQRWIHREHLFNMPQKLTNVSLCGSACAVSDDEGKIHVINDISNEKFNPQILHWHANPLNGLSWALNGEYLLSGGQEGVLVLWQMETSHRQFLPRLGSSILSIATSHDSDSYALHLGDNSLVVIRAVDLAEQIHVSGINSFESKYLTSTGPKNTSKQLQGLVQFSSVSPNGELLLMSSSSFNGHSVSVQEYDLTKDSTIRKFEAARYSYSSVSKNSDDATSLDNGHVGSVAVTSSRNGLYIATIDTWCTNIIDEQQRNVKQTALKFWQFDSVQKTWVLMTRIDNPHGNLEVVTALKMMTSSNRFITVGTDATLRIWALLPGSSAWKCVAIHHFANTHSQASIKQRYGFSKALTCSLDDSIIGFGYGSCMHFINSETLEEISTVDLPHGGQLENAQFLNAEHCVIISQRRLLVWNVISASVQWTLASKFTGLLASSSSGNDFAVIDFNSSYSRLIIFSPDSPKIQSIHIFKTLPVALHYLHGGFVVLDNKSIIHVYAGDLTTKIPSAQLSIDNTSRSLLGDFQKRNVPLLNLENPISGSQGLHYKRLTTDMIHNLFNVPSNSPVNMQAIYNTFSKMAVGEPMESLGTQIATLNTE.

4 WD repeats span residues 266 to 305, 448 to 489, 499 to 538, and 598 to 635; these read WHANPLNGLSWALNGEYLLSGGQEGVLVLWQMETSHRQFL, RNGL…KTWV, GNLEVVTALKMMTSSNRFITVGTDATLRIWALLPGSSAWK, and PHGGQLENAQFLNAEHCVIISQRRLLVWNVISASVQWT.

As to quaternary structure, component of the ribosomal small subunit (SSU) processome.

It is found in the nucleus. Its subcellular location is the nucleolus. Its function is as follows. Involved in nucleolar processing of pre-18S ribosomal RNA. Required for optimal pre-ribosomal RNA transcription by RNA polymerase I together with a subset of U3 proteins required for transcription (t-UTPs). The protein is U3 small nucleolar RNA-associated protein 17 (utp17) of Schizosaccharomyces pombe (strain 972 / ATCC 24843) (Fission yeast).